The primary structure comprises 218 residues: Testis expressed protein 56 (218 aa).

The protein is Testis expressed protein 56 (Tex56) of Rattus norvegicus (Rat).